The chain runs to 273 residues: Diphthine methyl ester synthase (273 aa).

Residues Leu-10, Asp-87, Gly-90, 115-116 (SI), Leu-166, Val-224, and His-249 each bind S-adenosyl-L-methionine.

This sequence belongs to the diphthine synthase family.

It catalyses the reaction 2-[(3S)-amino-3-carboxypropyl]-L-histidyl-[translation elongation factor 2] + 4 S-adenosyl-L-methionine = diphthine methyl ester-[translation elongation factor 2] + 4 S-adenosyl-L-homocysteine + 3 H(+). It participates in protein modification; peptidyl-diphthamide biosynthesis. Functionally, S-adenosyl-L-methionine-dependent methyltransferase that catalyzes four methylations of the modified target histidine residue in translation elongation factor 2 (EF-2), to form an intermediate called diphthine methyl ester. The four successive methylation reactions represent the second step of diphthamide biosynthesis. This Dictyostelium discoideum (Social amoeba) protein is Diphthine methyl ester synthase (dph5).